The chain runs to 352 residues: Chymopapain (352 aa).

An N-terminal signal peptide occupies residues Met-1–Ile-18. Positions Ile-19–Asn-134 are cleaved as a propeptide — activation peptide. N-linked (GlcNAc...) asparagine glycosylation is present at Asn-86. 3 cysteine pairs are disulfide-bonded: Cys-156-Cys-197, Cys-190-Cys-229, and Cys-287-Cys-338. Cys-159 is an active-site residue. Residues His-293 and Asn-313 contribute to the active site.

The protein belongs to the peptidase C1 family.

The catalysed reaction is Specificity similar to that of papain.. Cysteine proteinase with a high level of diversity in substrate specificity. This is Chymopapain from Carica papaya (Papaya).